The primary structure comprises 192 residues: uncharacterized protein (192 aa).

The first 24 residues, 1–24 (MSGVLSCVLRACACAGLCCWVCMG), serve as a signal peptide directing secretion. The disordered stretch occupies residues 140-192 (RAGADEGAGGNAAGCPEDTRGFARSPGDLMGGMNGDLGDEGETGEGGDNGAGE).

This is an uncharacterized protein from Human herpesvirus 6A (strain Uganda-1102) (HHV-6 variant A).